The primary structure comprises 84 residues: Large ribosomal subunit protein bL27 (84 aa).

The segment at 1–25 (MAHKKGQGSTQNNRDSAGRRLGVKK) is disordered.

It belongs to the bacterial ribosomal protein bL27 family.

This chain is Large ribosomal subunit protein bL27, found in Sulfurovum sp. (strain NBC37-1).